Reading from the N-terminus, the 598-residue chain is Beta-fructofuranosidase, insoluble isoenzyme 2 (598 aa).

An N-terminal signal peptide occupies residues 1 to 25; the sequence is MGVLGSRVAWAWLVQLLLLQQLAGA. D69 is an active-site residue. Residues N164, N189, and N348 are each glycosylated (N-linked (GlcNAc...) asparagine).

It belongs to the glycosyl hydrolase 32 family.

The protein resides in the secreted. It localises to the extracellular space. It is found in the apoplast. Its subcellular location is the cell wall. It carries out the reaction Hydrolysis of terminal non-reducing beta-D-fructofuranoside residues in beta-D-fructofuranosides.. Its function is as follows. May play a role in sucrose partitioning during seed development. The chain is Beta-fructofuranosidase, insoluble isoenzyme 2 (CIN2) from Oryza sativa subsp. indica (Rice).